Here is a 928-residue protein sequence, read N- to C-terminus: 2-oxoglutarate dehydrogenase E1 component (928 aa).

It belongs to the alpha-ketoglutarate dehydrogenase family. In terms of assembly, homodimer. Part of the 2-oxoglutarate dehydrogenase (OGDH) complex composed of E1 (2-oxoglutarate dehydrogenase), E2 (dihydrolipoamide succinyltransferase) and E3 (dihydrolipoamide dehydrogenase); the complex contains multiple copies of the three enzymatic components (E1, E2 and E3). The cofactor is thiamine diphosphate.

It catalyses the reaction N(6)-[(R)-lipoyl]-L-lysyl-[protein] + 2-oxoglutarate + H(+) = N(6)-[(R)-S(8)-succinyldihydrolipoyl]-L-lysyl-[protein] + CO2. Its function is as follows. E1 component of the 2-oxoglutarate dehydrogenase (OGDH) complex which catalyzes the decarboxylation of 2-oxoglutarate, the first step in the conversion of 2-oxoglutarate to succinyl-CoA and CO(2). The chain is 2-oxoglutarate dehydrogenase E1 component (sucA) from Rickettsia conorii (strain ATCC VR-613 / Malish 7).